Consider the following 438-residue polypeptide: Histidinol dehydrogenase (438 aa).

The NAD(+) site is built by Tyr-135, Gln-193, and Asn-216. 3 residues coordinate substrate: Ser-243, Gln-265, and His-268. Zn(2+) contacts are provided by Gln-265 and His-268. Active-site proton acceptor residues include Glu-332 and His-333. Substrate-binding residues include His-333, Asp-366, Glu-420, and His-425. Asp-366 serves as a coordination point for Zn(2+). His-425 contacts Zn(2+).

Belongs to the histidinol dehydrogenase family. Zn(2+) is required as a cofactor.

The catalysed reaction is L-histidinol + 2 NAD(+) + H2O = L-histidine + 2 NADH + 3 H(+). It participates in amino-acid biosynthesis; L-histidine biosynthesis; L-histidine from 5-phospho-alpha-D-ribose 1-diphosphate: step 9/9. Catalyzes the sequential NAD-dependent oxidations of L-histidinol to L-histidinaldehyde and then to L-histidine. In Shewanella oneidensis (strain ATCC 700550 / JCM 31522 / CIP 106686 / LMG 19005 / NCIMB 14063 / MR-1), this protein is Histidinol dehydrogenase.